The sequence spans 239 residues: Transcriptional regulatory protein DcuR (239 aa).

Residues 3 to 121 form the Response regulatory domain; sequence NVLIIDDDAM…RFEEALTGWR (119 aa). Aspartate 56 carries the post-translational modification 4-aspartylphosphate. Residues 181–200 constitute a DNA-binding region (H-T-H motif); the sequence is TDELANEVNISRVSCRKYLI.

Post-translationally, phosphorylated and activated by DcuS.

The protein localises to the cytoplasm. Its function is as follows. Member of the two-component regulatory system DcuR/DcuS. Involved in the C4-dicarboxylate-stimulated regulation of the genes encoding the anaerobic fumarate respiratory system (frdABCD; nuoAN; dcuB; dcuC; sdhCDAB; etc.). Weakly regulates the aerobic C4-dicarboxylate transporter dctA. The chain is Transcriptional regulatory protein DcuR (dcuR) from Shigella flexneri.